Reading from the N-terminus, the 343-residue chain is tRNA N6-adenosine threonylcarbamoyltransferase (343 aa).

The Fe cation site is built by histidine 111 and histidine 115. Residues 134-138 (LVSGG), aspartate 167, glycine 180, and asparagine 276 contribute to the substrate site. Aspartate 304 is a Fe cation binding site.

It belongs to the KAE1 / TsaD family. The cofactor is Fe(2+).

It localises to the cytoplasm. It catalyses the reaction L-threonylcarbamoyladenylate + adenosine(37) in tRNA = N(6)-L-threonylcarbamoyladenosine(37) in tRNA + AMP + H(+). Required for the formation of a threonylcarbamoyl group on adenosine at position 37 (t(6)A37) in tRNAs that read codons beginning with adenine. Is involved in the transfer of the threonylcarbamoyl moiety of threonylcarbamoyl-AMP (TC-AMP) to the N6 group of A37, together with TsaE and TsaB. TsaD likely plays a direct catalytic role in this reaction. The polypeptide is tRNA N6-adenosine threonylcarbamoyltransferase (Hahella chejuensis (strain KCTC 2396)).